The primary structure comprises 212 residues: Holliday junction branch migration complex subunit RuvA (212 aa).

The domain I stretch occupies residues 1–70; the sequence is MISYLKGSPI…EDQQILYGFS (70 aa). A domain II region spans residues 71-149; sequence TTAERELFRQ…QWRKMVGVTV (79 aa). The tract at residues 150 to 160 is flexible linker; sequence TSSAAMPSLEI. Residues 160–212 form a domain III region; sequence ILEDIEMTLLALGYTNEEINKAISTLSQDNLMLKNTNTEEWIKEAIAWLSQGT.

It belongs to the RuvA family. As to quaternary structure, homotetramer. Forms an RuvA(8)-RuvB(12)-Holliday junction (HJ) complex. HJ DNA is sandwiched between 2 RuvA tetramers; dsDNA enters through RuvA and exits via RuvB. An RuvB hexamer assembles on each DNA strand where it exits the tetramer. Each RuvB hexamer is contacted by two RuvA subunits (via domain III) on 2 adjacent RuvB subunits; this complex drives branch migration. In the full resolvosome a probable DNA-RuvA(4)-RuvB(12)-RuvC(2) complex forms which resolves the HJ.

Its subcellular location is the cytoplasm. In terms of biological role, the RuvA-RuvB-RuvC complex processes Holliday junction (HJ) DNA during genetic recombination and DNA repair, while the RuvA-RuvB complex plays an important role in the rescue of blocked DNA replication forks via replication fork reversal (RFR). RuvA specifically binds to HJ cruciform DNA, conferring on it an open structure. The RuvB hexamer acts as an ATP-dependent pump, pulling dsDNA into and through the RuvAB complex. HJ branch migration allows RuvC to scan DNA until it finds its consensus sequence, where it cleaves and resolves the cruciform DNA. This is Holliday junction branch migration complex subunit RuvA from Crocosphaera subtropica (strain ATCC 51142 / BH68) (Cyanothece sp. (strain ATCC 51142)).